The sequence spans 288 residues: Co-chaperone protein DjlA (288 aa).

Residues 1–6 (MEFIGK) are Periplasmic-facing. Residues 7-30 (IIGVFLGWKVGGFFGAIAGLILGS) form a helical membrane-spanning segment. Residues 31–288 (IADKKLYELG…DLICKAKGWK (258 aa)) are Cytoplasmic-facing. Residues 222–288 (DAYKVLGVTE…DLICKAKGWK (67 aa)) form the J domain.

In terms of assembly, homodimer.

It localises to the cell inner membrane. Functionally, regulatory DnaK co-chaperone. Direct interaction between DnaK and DjlA is needed for the induction of the wcaABCDE operon, involved in the synthesis of a colanic acid polysaccharide capsule, possibly through activation of the RcsB/RcsC phosphotransfer signaling pathway. The colanic acid capsule may help the bacterium survive conditions outside the host. The polypeptide is Co-chaperone protein DjlA (Haemophilus influenzae (strain ATCC 51907 / DSM 11121 / KW20 / Rd)).